Consider the following 588-residue polypeptide: NADP-dependent malic enzyme 3 (588 aa).

Glycine 2 is subject to N-acetylglycine. Catalysis depends on tyrosine 136, which acts as the Proton donor. Arginine 189 is an NADP(+) binding site. Lysine 207 (proton acceptor) is an active-site residue. Residues glutamate 279, aspartate 280, and aspartate 303 each contribute to the a divalent metal cation site. NADP(+)-binding positions include aspartate 303, 332–348 (LFLGAGEAGTGIAELIA), and asparagine 444.

It belongs to the malic enzymes family. In terms of assembly, homohexamers and homooctamers. Mg(2+) serves as cofactor. Requires Mn(2+) as cofactor. As to expression, mostly expressed in flowers, and, to a lower extent, in stems. In leaves and stems, restricted to the trichomes and trichome basal cells. Also present in the stipules flanking the base of the inflorescence bract leaves and in the meristematic zone of developing lateral roots. In flowers, present in pollen and the abscission zone of developing siliques.

The protein resides in the cytoplasm. It carries out the reaction (S)-malate + NADP(+) = pyruvate + CO2 + NADPH. The enzyme catalyses oxaloacetate + H(+) = pyruvate + CO2. Slightly activated by succinate and aspartate. Repressed by fumarate, malate, oxaloacetate and glucose. In Arabidopsis thaliana (Mouse-ear cress), this protein is NADP-dependent malic enzyme 3 (NADP-ME3).